We begin with the raw amino-acid sequence, 126 residues long: Aspartate 1-decarboxylase (126 aa).

Serine 25 acts as the Schiff-base intermediate with substrate; via pyruvic acid in catalysis. Position 25 is a pyruvic acid (Ser) (serine 25). Threonine 57 is a binding site for substrate. Tyrosine 58 functions as the Proton donor in the catalytic mechanism. 73 to 75 (GAA) provides a ligand contact to substrate.

Belongs to the PanD family. Heterooctamer of four alpha and four beta subunits. It depends on pyruvate as a cofactor. Is synthesized initially as an inactive proenzyme, which is activated by self-cleavage at a specific serine bond to produce a beta-subunit with a hydroxyl group at its C-terminus and an alpha-subunit with a pyruvoyl group at its N-terminus.

Its subcellular location is the cytoplasm. It catalyses the reaction L-aspartate + H(+) = beta-alanine + CO2. The protein operates within cofactor biosynthesis; (R)-pantothenate biosynthesis; beta-alanine from L-aspartate: step 1/1. Catalyzes the pyruvoyl-dependent decarboxylation of aspartate to produce beta-alanine. In Acetivibrio thermocellus (strain ATCC 27405 / DSM 1237 / JCM 9322 / NBRC 103400 / NCIMB 10682 / NRRL B-4536 / VPI 7372) (Clostridium thermocellum), this protein is Aspartate 1-decarboxylase.